A 297-amino-acid polypeptide reads, in one-letter code: N-acetylneuraminate lyase (297 aa).

Residues Ser-47 and Thr-48 each contribute to the aceneuramate site. Tyr-137 functions as the Proton donor in the catalytic mechanism. The active-site Schiff-base intermediate with substrate is the Lys-165. Residues Thr-167, Gly-189, Asp-191, Glu-192, and Ser-208 each contribute to the aceneuramate site.

It belongs to the DapA family. NanA subfamily. Homotetramer.

Its subcellular location is the cytoplasm. It carries out the reaction aceneuramate = aldehydo-N-acetyl-D-mannosamine + pyruvate. Its pathway is amino-sugar metabolism; N-acetylneuraminate degradation; D-fructose 6-phosphate from N-acetylneuraminate: step 1/5. Its function is as follows. Catalyzes the reversible aldol cleavage of N-acetylneuraminic acid (sialic acid; Neu5Ac) to form pyruvate and N-acetylmannosamine (ManNAc) via a Schiff base intermediate. The protein is N-acetylneuraminate lyase of Escherichia coli (strain SMS-3-5 / SECEC).